The primary structure comprises 285 residues: Release factor glutamine methyltransferase (285 aa).

S-adenosyl-L-methionine-binding positions include 119–123, E142, W175, and N191; that span reads GTGSG. 191–194 provides a ligand contact to substrate; that stretch reads NPPY.

It belongs to the protein N5-glutamine methyltransferase family. PrmC subfamily.

It carries out the reaction L-glutaminyl-[peptide chain release factor] + S-adenosyl-L-methionine = N(5)-methyl-L-glutaminyl-[peptide chain release factor] + S-adenosyl-L-homocysteine + H(+). Methylates the class 1 translation termination release factors RF1/PrfA and RF2/PrfB on the glutamine residue of the universally conserved GGQ motif. In Burkholderia pseudomallei (strain K96243), this protein is Release factor glutamine methyltransferase.